A 604-amino-acid chain; its full sequence is Lipoprotein LpqB (604 aa).

Residues 1-27 (MTMRAARLSGSTGLTAALVAVLLVLTG) form the signal peptide. Cys-28 carries N-palmitoyl cysteine lipidation. The S-diacylglycerol cysteine moiety is linked to residue Cys-28. Residues 35–60 (SAPQALGTIDREPTSEGPTPPIAGRD) are disordered.

It belongs to the LpqB lipoprotein family.

The protein localises to the cell membrane. The sequence is that of Lipoprotein LpqB from Nocardia farcinica (strain IFM 10152).